A 150-amino-acid polypeptide reads, in one-letter code: UPF0260 protein CGSHiGG_00425 (150 aa).

Belongs to the UPF0260 family.

This is UPF0260 protein CGSHiGG_00425 from Haemophilus influenzae (strain PittGG).